The primary structure comprises 418 residues: Glutamyl-tRNA reductase (418 aa).

Substrate-binding positions include 49–52 (TCNR), S107, 112–114 (EPQ), and Q118. The active-site Nucleophile is C50. 187 to 192 (GAGETI) serves as a coordination point for NADP(+).

Belongs to the glutamyl-tRNA reductase family. Homodimer.

The catalysed reaction is (S)-4-amino-5-oxopentanoate + tRNA(Glu) + NADP(+) = L-glutamyl-tRNA(Glu) + NADPH + H(+). Its pathway is porphyrin-containing compound metabolism; protoporphyrin-IX biosynthesis; 5-aminolevulinate from L-glutamyl-tRNA(Glu): step 1/2. Functionally, catalyzes the NADPH-dependent reduction of glutamyl-tRNA(Glu) to glutamate 1-semialdehyde (GSA). The polypeptide is Glutamyl-tRNA reductase (Aeromonas salmonicida (strain A449)).